Here is a 106-residue protein sequence, read N- to C-terminus: Ferredoxin (106 aa).

[3Fe-4S] cluster is bound by residues Cys-9 and Cys-17. [4Fe-4S] cluster-binding residues include Cys-21, Cys-40, Cys-43, and Cys-46. Positions 31-60 (RMLYIHPDECVDCGACEPVCPVEAIYYEDD) constitute a 4Fe-4S ferredoxin-type domain. Cys-50 is a binding site for [3Fe-4S] cluster. The interval 84–106 (GAAKVGKVDRDVEPVSSLPPQGE) is disordered.

[4Fe-4S] cluster is required as a cofactor. The cofactor is [3Fe-4S] cluster.

Ferredoxins are iron-sulfur proteins that transfer electrons in a wide variety of metabolic reactions. This is Ferredoxin (fdxA) from Saccharopolyspora erythraea (Streptomyces erythraeus).